Here is a 518-residue protein sequence, read N- to C-terminus: Filamentous growth regulator 15 (518 aa).

Positions 1–41 (MESTLSVSDEKLTNSSTALNNCGDNKESSQVLTTANTTTDN) are enriched in polar residues. Disordered regions lie at residues 1-63 (MEST…SKER), 75-101 (VDPN…DHGK), and 261-307 (KSRS…KQHR). Positions 42–52 (QQVQPKSQHQQ) are enriched in low complexity. The segment covering 77–95 (PNQQSKNTVSDSVQDTTGV) has biased composition (polar residues). The span at 262–274 (SRSRSKVTKKRKV) shows a compositional bias: basic residues. Residues 283-298 (SNTATATTSVTTPDAN) show a composition bias toward low complexity. A C2H2-type zinc finger spans residues 374-406 (HECQLPSAEEPHKLCLRRFSRKYELIRHQETVH). The segment at 492-518 (RKSSGDDTNYMETSDLESGEEEVTFNK) is disordered. The span at 505–518 (SDLESGEEEVTFNK) shows a compositional bias: acidic residues.

The protein localises to the nucleus. Probable transcription factor involved in the regulation of filamentous growth. The polypeptide is Filamentous growth regulator 15 (FGR15) (Candida albicans (strain SC5314 / ATCC MYA-2876) (Yeast)).